Reading from the N-terminus, the 399-residue chain is Chorismate synthase (399 aa).

Residues 41–72 (IQKDLDRRKPGQSMITTSRGEPDKVTINSGIQ) are disordered. Arginine 48 is a binding site for NADP(+). Residues 125–127 (RSS), glycine 288, 303–307 (HAPVS), and arginine 330 each bind FMN. 2 stretches are compositionally biased toward basic and acidic residues: residues 363-377 (PDRL…DTDY) and 389-399 (ADTHAKTIDDD). The interval 363 to 399 (PDRLDGRPGEYDTDYHPSSPQNDPEDADTHAKTIDDD) is disordered.

Belongs to the chorismate synthase family. Requires FMNH2 as cofactor.

It catalyses the reaction 5-O-(1-carboxyvinyl)-3-phosphoshikimate = chorismate + phosphate. The protein operates within metabolic intermediate biosynthesis; chorismate biosynthesis; chorismate from D-erythrose 4-phosphate and phosphoenolpyruvate: step 7/7. In terms of biological role, catalyzes the anti-1,4-elimination of the C-3 phosphate and the C-6 proR hydrogen from 5-enolpyruvylshikimate-3-phosphate (EPSP) to yield chorismate, which is the branch point compound that serves as the starting substrate for the three terminal pathways of aromatic amino acid biosynthesis. This reaction introduces a second double bond into the aromatic ring system. This Haloarcula marismortui (strain ATCC 43049 / DSM 3752 / JCM 8966 / VKM B-1809) (Halobacterium marismortui) protein is Chorismate synthase.